The sequence spans 284 residues: Bifunctional protein FolD (284 aa).

NADP(+)-binding positions include glycine 165 to serine 167 and serine 190.

It belongs to the tetrahydrofolate dehydrogenase/cyclohydrolase family. As to quaternary structure, homodimer.

The enzyme catalyses (6R)-5,10-methylene-5,6,7,8-tetrahydrofolate + NADP(+) = (6R)-5,10-methenyltetrahydrofolate + NADPH. It carries out the reaction (6R)-5,10-methenyltetrahydrofolate + H2O = (6R)-10-formyltetrahydrofolate + H(+). It functions in the pathway one-carbon metabolism; tetrahydrofolate interconversion. In terms of biological role, catalyzes the oxidation of 5,10-methylenetetrahydrofolate to 5,10-methenyltetrahydrofolate and then the hydrolysis of 5,10-methenyltetrahydrofolate to 10-formyltetrahydrofolate. In Streptococcus equi subsp. equi (strain 4047), this protein is Bifunctional protein FolD.